A 241-amino-acid chain; its full sequence is Aquaporin Z 1 (241 aa).

The helical transmembrane segment at 23–43 (AVFAAAFPELGIGFLGVAFAF) threads the bilayer. Residues 63-65 (NPA) carry the NPA 1 motif. The next 3 helical transmembrane spans lie at 85–105 (IVAQ…ILTG), 129–149 (LLSA…VILG), and 156–176 (PVGF…LISI). The NPA 2 signature appears at 184–186 (NPA). Residues 204 to 224 (WLFWLAPILGGAIGAVVWKIF) traverse the membrane as a helical segment.

The protein belongs to the MIP/aquaporin (TC 1.A.8) family. Homotetramer.

It is found in the cell inner membrane. The enzyme catalyses H2O(in) = H2O(out). Its function is as follows. Channel that permits osmotically driven movement of water in both directions. It is involved in the osmoregulation and in the maintenance of cell turgor during volume expansion in rapidly growing cells. It mediates rapid entry or exit of water in response to abrupt changes in osmolarity. This is Aquaporin Z 1 from Agrobacterium fabrum (strain C58 / ATCC 33970) (Agrobacterium tumefaciens (strain C58)).